Reading from the N-terminus, the 141-residue chain is Actin-depolymerizing factor 9 (141 aa).

Phosphoserine is present on serine 8. An ADF-H domain is found at 8 to 141; sequence SGMWMTDDCK…GFDKIQDRAK (134 aa).

Belongs to the actin-binding proteins ADF family.

It is found in the cytoplasm. The protein localises to the cytoskeleton. In terms of biological role, does not display typical F-actin depolymerizing activity. Exhibits a high ability to stabilize and cross-link actin filaments. Functions as an actin bundling protein with the highest efficiency under acidic conditions. May play a role in the modulation of levels of histone H3 lysine 4 trimethylation and H3 lysine 9 and 14 acetylation at the FLC locus. The sequence is that of Actin-depolymerizing factor 9 (ADF9) from Arabidopsis thaliana (Mouse-ear cress).